The chain runs to 116 residues: Probable non-functional immunoglobulin kappa variable 3-7 (116 aa).

A signal peptide spans 1 to 21 (MEAPAQLLFLLLLWLPDTTRE). The framework-1 stretch occupies residues 21–43 (EIVMTQSPPTLSLSPGERVTLSC). In terms of domain architecture, Ig-like spans 22–116 (IVMTQSPPTL…YYCQQDYNLP (95 aa)). Cysteine 43 and cysteine 109 form a disulfide bridge. The segment at 44–55 (RASQSVSSSYLT) is complementarity-determining-1. Positions 56–70 (WYQQKPGQAPRLLIY) are framework-2. The interval 71-77 (GASTRAT) is complementarity-determining-2. The interval 78–109 (SIPARFSGSGSGTDFTLTISSLQPEDFAVYYC) is framework-3. A complementarity-determining-3 region spans residues 110–116 (QQDYNLP).

In terms of assembly, immunoglobulins are composed of two identical heavy chains and two identical light chains; disulfide-linked.

Its subcellular location is the secreted. The protein resides in the cell membrane. Probable non-functional open reading frame (ORF) of V region of the variable domain of immunoglobulin light chains. Non-functional ORF generally cannot participate in the synthesis of a productive immunoglobulin chain due to altered V-(D)-J or switch recombination and/or splicing site (at mRNA level) and/or conserved amino acid change (protein level). Immunoglobulins, also known as antibodies, are membrane-bound or secreted glycoproteins produced by B lymphocytes. In the recognition phase of humoral immunity, the membrane-bound immunoglobulins serve as receptors which, upon binding of a specific antigen, trigger the clonal expansion and differentiation of B lymphocytes into immunoglobulins-secreting plasma cells. Secreted immunoglobulins mediate the effector phase of humoral immunity, which results in the elimination of bound antigens. The antigen binding site is formed by the variable domain of one heavy chain, together with that of its associated light chain. Thus, each immunoglobulin has two antigen binding sites with remarkable affinity for a particular antigen. The variable domains are assembled by a process called V-(D)-J rearrangement and can then be subjected to somatic hypermutations which, after exposure to antigen and selection, allow affinity maturation for a particular antigen. This chain is Probable non-functional immunoglobulin kappa variable 3-7, found in Homo sapiens (Human).